Here is a 545-residue protein sequence, read N- to C-terminus: Chaperonin GroEL (545 aa).

ATP contacts are provided by residues 29-32 (TLGP), K50, 86-90 (DGTTT), G415, and D495.

Belongs to the chaperonin (HSP60) family. Forms a cylinder of 14 subunits composed of two heptameric rings stacked back-to-back. Interacts with the co-chaperonin GroES.

The protein localises to the cytoplasm. It catalyses the reaction ATP + H2O + a folded polypeptide = ADP + phosphate + an unfolded polypeptide.. Its function is as follows. Together with its co-chaperonin GroES, plays an essential role in assisting protein folding. The GroEL-GroES system forms a nano-cage that allows encapsulation of the non-native substrate proteins and provides a physical environment optimized to promote and accelerate protein folding. In Bacteroides thetaiotaomicron (strain ATCC 29148 / DSM 2079 / JCM 5827 / CCUG 10774 / NCTC 10582 / VPI-5482 / E50), this protein is Chaperonin GroEL.